The sequence spans 137 residues: Beta-synuclein (137 aa).

2 repeat units span residues 20 to 30 (EKTKQGVTEAA) and 31 to 41 (EKTKEGVLYVG). Positions 20 to 67 (EKTKQGVTEAAEKTKEGVLYVGSKTKEGVVQGVASVAEKTKEQASHLG) are 4 X 11 AA tandem repeats of [EGS]-K-T-K-[EQ]-[GQ]-V-X(4). The stretch at 42 to 56 (SKTKEGVVQGVASVA) is one 3; approximate repeat. Residues 57-67 (EKTKEQASHLG) form repeat 4. Residues 88–97 (EFPTDLKPEE) are compositionally biased toward basic and acidic residues. Positions 88–137 (EFPTDLKPEEVAQEAAEEPLIEPLMEPEGESYEDSPQEEYQEYEPEAKGP) are disordered. The segment covering 98-131 (VAQEAAEEPLIEPLMEPEGESYEDSPQEEYQEYE) has biased composition (acidic residues). A Phosphoserine; by BARK1, CK2 and GRK5 modification is found at Ser118.

It belongs to the synuclein family. In terms of processing, phosphorylated. Phosphorylation by G-protein coupled receptor kinases (GRK) is more efficient than phosphorylation by CK1, CK2 and CaM-kinase II. As to expression, expressed specifically in brain.

It localises to the cytoplasm. Functionally, may be involved in neuronal plasticity. The chain is Beta-synuclein (Sncb) from Rattus norvegicus (Rat).